The primary structure comprises 416 residues: Serine hydroxymethyltransferase (416 aa).

Residues Leu121 and 125 to 127 (GHL) each bind (6S)-5,6,7,8-tetrahydrofolate. Lys229 bears the N6-(pyridoxal phosphate)lysine mark.

The protein belongs to the SHMT family. In terms of assembly, homodimer. The cofactor is pyridoxal 5'-phosphate.

The protein resides in the cytoplasm. It catalyses the reaction (6R)-5,10-methylene-5,6,7,8-tetrahydrofolate + glycine + H2O = (6S)-5,6,7,8-tetrahydrofolate + L-serine. It participates in one-carbon metabolism; tetrahydrofolate interconversion. It functions in the pathway amino-acid biosynthesis; glycine biosynthesis; glycine from L-serine: step 1/1. In terms of biological role, catalyzes the reversible interconversion of serine and glycine with tetrahydrofolate (THF) serving as the one-carbon carrier. This reaction serves as the major source of one-carbon groups required for the biosynthesis of purines, thymidylate, methionine, and other important biomolecules. Also exhibits THF-independent aldolase activity toward beta-hydroxyamino acids, producing glycine and aldehydes, via a retro-aldol mechanism. The chain is Serine hydroxymethyltransferase from Dechloromonas aromatica (strain RCB).